The following is a 695-amino-acid chain: Elongation factor G (695 aa).

Positions 8–282 constitute a tr-type G domain; it reads EKTRNIGIMA…AVLDYLPAPT (275 aa). GTP contacts are provided by residues 17 to 24, 81 to 85, and 135 to 138; these read AHIDAGKT, DTPGH, and NKMD.

It belongs to the TRAFAC class translation factor GTPase superfamily. Classic translation factor GTPase family. EF-G/EF-2 subfamily.

The protein resides in the cytoplasm. In terms of biological role, catalyzes the GTP-dependent ribosomal translocation step during translation elongation. During this step, the ribosome changes from the pre-translocational (PRE) to the post-translocational (POST) state as the newly formed A-site-bound peptidyl-tRNA and P-site-bound deacylated tRNA move to the P and E sites, respectively. Catalyzes the coordinated movement of the two tRNA molecules, the mRNA and conformational changes in the ribosome. This Listeria monocytogenes serotype 4b (strain CLIP80459) protein is Elongation factor G.